The following is a 262-amino-acid chain: Phosphonates import ATP-binding protein PhnC (262 aa).

In terms of domain architecture, ABC transporter spans 5–253 (IRVEKLAKTF…RFDHLYRSIN (249 aa)). 37–44 (GPSGSGKS) lines the ATP pocket.

The protein belongs to the ABC transporter superfamily. Phosphonates importer (TC 3.A.1.9.1) family. In terms of assembly, the complex is composed of two ATP-binding proteins (PhnC), two transmembrane proteins (PhnE) and a solute-binding protein (PhnD).

It localises to the cell inner membrane. It carries out the reaction phosphonate(out) + ATP + H2O = phosphonate(in) + ADP + phosphate + H(+). Part of the ABC transporter complex PhnCDE involved in phosphonates, phosphate esters, phosphite and phosphate import. Responsible for energy coupling to the transport system. The protein is Phosphonates import ATP-binding protein PhnC of Escherichia coli (strain K12).